The sequence spans 241 residues: 3-deoxy-D-manno-octulosonic acid kinase (241 aa).

Asp-171 is an active-site residue.

Belongs to the protein kinase superfamily. KdkA/RfaP family.

It localises to the cell inner membrane. The enzyme catalyses an alpha-Kdo-(2-&gt;6)-lipid IVA + ATP = a 4-O-phospho-alpha-Kdo-(2-&gt;6)-lipid IVA + ADP + H(+). Its pathway is bacterial outer membrane biogenesis; LPS core biosynthesis. Its function is as follows. Catalyzes the ATP-dependent phosphorylation of the 3-deoxy-D-manno-octulosonic acid (Kdo) residue in Kdo-lipid IV(A) at the 4-OH position. The sequence is that of 3-deoxy-D-manno-octulosonic acid kinase from Haemophilus influenzae (strain PittEE).